The following is a 424-amino-acid chain: 3-isopropylmalate dehydratase large subunit 1 (424 aa).

Residues Cys-303, Cys-363, and Cys-366 each coordinate [4Fe-4S] cluster.

It belongs to the aconitase/IPM isomerase family. LeuC type 2 subfamily. In terms of assembly, heterodimer of LeuC and LeuD. It depends on [4Fe-4S] cluster as a cofactor.

The catalysed reaction is (2R,3S)-3-isopropylmalate = (2S)-2-isopropylmalate. The protein operates within amino-acid biosynthesis; L-leucine biosynthesis; L-leucine from 3-methyl-2-oxobutanoate: step 2/4. In terms of biological role, catalyzes the isomerization between 2-isopropylmalate and 3-isopropylmalate, via the formation of 2-isopropylmaleate. The polypeptide is 3-isopropylmalate dehydratase large subunit 1 (Pyrococcus furiosus (strain ATCC 43587 / DSM 3638 / JCM 8422 / Vc1)).